The following is a 153-amino-acid chain: Protein E6 (153 aa).

Zinc fingers lie at residues 29 to 65 (CVYC…CEKC) and 102 to 138 (CYIC…CMNC).

Belongs to the papillomaviridae E6 protein family. Forms homodimers. Interacts with ubiquitin-protein ligase UBE3A/E6-AP; this interaction stimulates UBE3A ubiquitin activity. Interacts with host TP53 and EP300; this interaction inhibits TP53 activity.

It is found in the host cytoplasm. The protein localises to the host nucleus. Plays a major role in the induction and maintenance of cellular transformation. E6 associates with host UBE3A/E6-AP ubiquitin-protein ligase and modulates its activity. Sequesters tumor suppressor TP53 in the host cytoplasm and modulates its activity by interacting with host EP300 that results in the reduction of TP53 acetylation and activation. In turn, apoptosis induced by DNA damage is inhibited. E6 also protects host keratinocytes from apoptosis by mediating the degradation of host BAK1. May also inhibit host immune response. The polypeptide is Protein E6 (Homo sapiens (Human)).